The sequence spans 201 residues: Akirin-2 (201 aa).

A phosphoserine mark is found at Ser-18 and Ser-21. The short motif at 23–28 is the Nuclear localization signal element; the sequence is KRRRCA. Ser-55 bears the Phosphoserine mark. The SYVS motif motif lies at 198–201; it reads SYVS.

This sequence belongs to the akirin family. Homodimer. Interacts with IPO9; the interaction is direct. Associates with 20S and 26S proteasomes. Interacts with SMARCD1; promoting SWI/SNF complex recruitment. Interacts with NFKBIZ. Interacts with YWHAB. In terms of processing, polyubiquitinated. Polyubiquitination is dependent of UBR5 that extends pre-ubiquitinated AKIRIN2.

It localises to the nucleus. It is found in the cytoplasm. The protein localises to the membrane. Molecular adapter that acts as a bridge between a variety of multiprotein complexes, and which is involved in embryonic development, immunity, myogenesis and brain development. Plays a key role in nuclear protein degradation by promoting import of proteasomes into the nucleus: directly binds to fully assembled 20S proteasomes at one end and to nuclear import receptor IPO9 at the other end, bridging them together and mediating the import of pre-assembled proteasome complexes through the nuclear pore. Involved in innate immunity by regulating the production of interleukin-6 (IL6) downstream of Toll-like receptor (TLR): acts by bridging the NF-kappa-B inhibitor NFKBIZ and the SWI/SNF complex, leading to promote induction of IL6. Also involved in adaptive immunity by promoting B-cell activation. Involved in brain development: required for the survival and proliferation of cerebral cortical progenitor cells. Involved in myogenesis: required for skeletal muscle formation and skeletal development, possibly by regulating expression of muscle differentiation factors. Also plays a role in facilitating interdigital tissue regression during limb development. This chain is Akirin-2, found in Mus musculus (Mouse).